Here is a 367-residue protein sequence, read N- to C-terminus: Putative F-box protein At3g21120 (367 aa).

One can recognise an F-box domain in the interval 1-43; that stretch reads MHLPEDLVLEILSKVPAVSLARFRSTCRRWNALVVDGSFAKKH.

The chain is Putative F-box protein At3g21120 from Arabidopsis thaliana (Mouse-ear cress).